We begin with the raw amino-acid sequence, 149 residues long: Ribonuclease pancreatic (149 aa).

Positions 1–25 are cleaved as a signal peptide; sequence MGLEKSFILFSLLVLVLGWVQPSLG. The substrate site is built by lysine 32 and arginine 35. The active-site Proton acceptor is the histidine 37. Disulfide bonds link cysteine 51-cysteine 109, cysteine 65-cysteine 120, cysteine 83-cysteine 135, and cysteine 90-cysteine 97. Residues 66–70, lysine 91, and arginine 110 contribute to the substrate site; that span reads KPVNT. Histidine 144 acts as the Proton donor in catalysis.

This sequence belongs to the pancreatic ribonuclease family. As to quaternary structure, monomer. Interacts with and forms tight 1:1 complexes with RNH1. Dimerization of two such complexes may occur. Interaction with RNH1 inhibits this protein. As to expression, pancreas.

Its subcellular location is the secreted. The enzyme catalyses an [RNA] containing cytidine + H2O = an [RNA]-3'-cytidine-3'-phosphate + a 5'-hydroxy-ribonucleotide-3'-[RNA].. It catalyses the reaction an [RNA] containing uridine + H2O = an [RNA]-3'-uridine-3'-phosphate + a 5'-hydroxy-ribonucleotide-3'-[RNA].. In terms of biological role, endonuclease that catalyzes the cleavage of RNA on the 3' side of pyrimidine nucleotides. Acts on single-stranded and double-stranded RNA. The sequence is that of Ribonuclease pancreatic (RNASE1) from Leopoldamys edwardsi (Edwards's long-tailed giant rat).